We begin with the raw amino-acid sequence, 284 residues long: Phosphatidylglycerol--prolipoprotein diacylglyceryl transferase (284 aa).

Helical transmembrane passes span 18–38 (LGGI…VIAF), 62–82 (YFLW…VLIY), 106–126 (FVGI…IASY), 136–156 (LLIY…FGRI), 190–210 (PSQL…VLWA), 218–238 (GLLI…AEFY), and 252–272 (LSMG…ILLY). A 1,2-diacyl-sn-glycero-3-phospho-(1'-sn-glycerol) is bound at residue arginine 155.

It belongs to the Lgt family.

The protein localises to the cell inner membrane. It catalyses the reaction L-cysteinyl-[prolipoprotein] + a 1,2-diacyl-sn-glycero-3-phospho-(1'-sn-glycerol) = an S-1,2-diacyl-sn-glyceryl-L-cysteinyl-[prolipoprotein] + sn-glycerol 1-phosphate + H(+). It participates in protein modification; lipoprotein biosynthesis (diacylglyceryl transfer). Functionally, catalyzes the transfer of the diacylglyceryl group from phosphatidylglycerol to the sulfhydryl group of the N-terminal cysteine of a prolipoprotein, the first step in the formation of mature lipoproteins. The polypeptide is Phosphatidylglycerol--prolipoprotein diacylglyceryl transferase (Helicobacter pylori (strain G27)).